Consider the following 182-residue polypeptide: Large ribosomal subunit protein uL6 (182 aa).

It belongs to the universal ribosomal protein uL6 family. As to quaternary structure, part of the 50S ribosomal subunit.

This protein binds to the 23S rRNA, and is important in its secondary structure. It is located near the subunit interface in the base of the L7/L12 stalk, and near the tRNA binding site of the peptidyltransferase center. This Methanococcus vannielii protein is Large ribosomal subunit protein uL6.